We begin with the raw amino-acid sequence, 143 residues long: Small ribosomal subunit protein bS18 (143 aa).

Residues 1–72 (MARPDMGGPK…RGGEEGGRRG (72 aa)) form a disordered region. The span at 10 to 50 (KSSGGFGGPRSGGGFGGGGYGGGGGGGGGYGGGGGGGFGGR) shows a compositional bias: gly residues. The segment covering 51-70 (GGDRGDRGDRDDRGGEEGGR) has biased composition (basic and acidic residues).

Belongs to the bacterial ribosomal protein bS18 family. In terms of assembly, part of the 30S ribosomal subunit. Forms a tight heterodimer with protein bS6.

Binds as a heterodimer with protein bS6 to the central domain of the 16S rRNA, where it helps stabilize the platform of the 30S subunit. The chain is Small ribosomal subunit protein bS18 from Anaeromyxobacter sp. (strain Fw109-5).